Here is a 335-residue protein sequence, read N- to C-terminus: Methionine import ATP-binding protein MetN 1 (335 aa).

Residues 2–242 form the ABC transporter domain; it reads IEFQNVHKTY…PKHPTTKRFV (241 aa). ATP is bound at residue 38 to 45; the sequence is GHSGAGKS.

The protein belongs to the ABC transporter superfamily. Methionine importer (TC 3.A.1.24) family. The complex is composed of two ATP-binding proteins (MetN), two transmembrane proteins (MetI) and a solute-binding protein (MetQ).

It is found in the cell inner membrane. It carries out the reaction L-methionine(out) + ATP + H2O = L-methionine(in) + ADP + phosphate + H(+). It catalyses the reaction D-methionine(out) + ATP + H2O = D-methionine(in) + ADP + phosphate + H(+). Part of the ABC transporter complex MetNIQ involved in methionine import. Responsible for energy coupling to the transport system. The sequence is that of Methionine import ATP-binding protein MetN 1 from Pseudomonas fluorescens (strain Pf0-1).